The primary structure comprises 318 residues: Tyrosine recombinase XerD (318 aa).

The Core-binding (CB) domain occupies 5–90 (PSDAKLTGLF…AMRHLYRFLL (86 aa)). The Tyr recombinase domain maps to 111–310 (GLPKVLSIAD…VEERLKSLVR (200 aa)). Residues arginine 161, lysine 185, histidine 262, arginine 265, and histidine 288 contribute to the active site. Catalysis depends on tyrosine 297, which acts as the O-(3'-phospho-DNA)-tyrosine intermediate.

It belongs to the 'phage' integrase family. XerD subfamily. As to quaternary structure, forms a cyclic heterotetrameric complex composed of two molecules of XerC and two molecules of XerD.

It is found in the cytoplasm. Site-specific tyrosine recombinase, which acts by catalyzing the cutting and rejoining of the recombining DNA molecules. The XerC-XerD complex is essential to convert dimers of the bacterial chromosome into monomers to permit their segregation at cell division. It also contributes to the segregational stability of plasmids. The chain is Tyrosine recombinase XerD from Bradyrhizobium diazoefficiens (strain JCM 10833 / BCRC 13528 / IAM 13628 / NBRC 14792 / USDA 110).